The sequence spans 411 residues: D-ribitol-5-phosphate cytidylyltransferase (411 aa).

The protein belongs to the IspD/TarI cytidylyltransferase family. IspD subfamily. In terms of assembly, homodimer.

It localises to the cytoplasm. The protein localises to the cytosol. It catalyses the reaction D-ribitol 5-phosphate + CTP + H(+) = CDP-L-ribitol + diphosphate. The enzyme catalyses D-ribose 5-phosphate + CTP + H(+) = CDP-D-ribose + diphosphate. It carries out the reaction D-ribulose 5-phosphate + CTP + H(+) = CDP-D-ribulose + diphosphate. It functions in the pathway protein modification; protein glycosylation. Its function is as follows. Cytidylyltransferase required for protein O-linked mannosylation. Catalyzes the formation of CDP-ribitol nucleotide sugar from D-ribitol 5-phosphate. CDP-ribitol is a substrate of FKTN during the biosynthesis of the phosphorylated O-mannosyl trisaccharide (N-acetylgalactosamine-beta-3-N-acetylglucosamine-beta-4-(phosphate-6-)mannose), a carbohydrate structure present in alpha-dystroglycan (DAG1), which is required for binding laminin G-like domain-containing extracellular proteins with high affinity. Shows activity toward other pentose phosphate sugars and mediates formation of CDP-ribulose or CDP-ribose using CTP and ribulose-5-phosphate or ribose-5-phosphate, respectively. Not involved in dolichol production. The polypeptide is D-ribitol-5-phosphate cytidylyltransferase (crppa) (Xenopus tropicalis (Western clawed frog)).